We begin with the raw amino-acid sequence, 414 residues long: Probable elongation factor 1-gamma 1 (414 aa).

The GST N-terminal domain occupies 1 to 82; the sequence is MALVLHTYKG…YVSRLNGDNS (82 aa). A GST C-terminal domain is found at 87–215; that stretch reads SLIEYAQIEQ…VKQTEAVPPI (129 aa). Residues 214-224 are compositionally biased toward low complexity; sequence PIASKKAAQPA. The interval 214–260 is disordered; it reads PIASKKAAQPAKPKEEPKKKEAPVAEAPKLAEEEEAPKPKAKNPLDL. The segment covering 225–236 has biased composition (basic and acidic residues); sequence KPKEEPKKKEAP. In terms of domain architecture, EF-1-gamma C-terminal spans 254 to 414; sequence AKNPLDLLPP…EALLDAKCFK (161 aa).

EF-1 is composed of four subunits: alpha, beta, delta, and gamma.

Its function is as follows. Probably plays a role in anchoring the complex to other cellular components. In Arabidopsis thaliana (Mouse-ear cress), this protein is Probable elongation factor 1-gamma 1.